We begin with the raw amino-acid sequence, 441 residues long: Ribulose bisphosphate carboxylase (441 aa).

Catalysis depends on Lys160, which acts as the Proton acceptor. Residue Lys162 participates in substrate binding. Residues Lys186, Asp188, and Glu189 each coordinate Mg(2+). An N6-carboxylysine modification is found at Lys186. Catalysis depends on His278, which acts as the Proton acceptor. Substrate is bound by residues Arg279, His311, Ser364–Gly366, and Gln386–Gly389.

It belongs to the RuBisCO large chain family. Type III subfamily. Homodimer. In contrast to form I RuBisCO, the form III RuBisCO is composed solely of large subunits. Mg(2+) serves as cofactor.

It catalyses the reaction 2 (2R)-3-phosphoglycerate + 2 H(+) = D-ribulose 1,5-bisphosphate + CO2 + H2O. The enzyme catalyses D-ribulose 1,5-bisphosphate + O2 = 2-phosphoglycolate + (2R)-3-phosphoglycerate + 2 H(+). Reversibly inhibited by O(2). Functionally, catalyzes the addition of molecular CO(2) and H(2)O to ribulose 1,5-bisphosphate (RuBP), generating two molecules of 3-phosphoglycerate (3-PGA). Functions in an archaeal AMP degradation pathway, together with AMP phosphorylase and R15P isomerase. The protein is Ribulose bisphosphate carboxylase of Archaeoglobus fulgidus (strain ATCC 49558 / DSM 4304 / JCM 9628 / NBRC 100126 / VC-16).